The sequence spans 407 residues: Lysophospholipid transporter LplT (407 aa).

11 helical membrane passes run 18–38 (AVII…FATL), 53–73 (FLQM…GQIA), 91–111 (AGAL…LVGV), 139–159 (LMEA…GVLA), 163–183 (IYGA…ANML), 229–249 (WGAG…ALGI), 257–277 (LLNA…AKLV), 286–306 (LPAG…HNLM), 310–330 (SLLI…NALL), 343–365 (AIAV…YSLV), and 375–395 (IGIG…VWLI).

This sequence belongs to the major facilitator superfamily. LplT (TC 2.A.1.42) family.

It localises to the cell inner membrane. In terms of biological role, catalyzes the facilitated diffusion of 2-acyl-glycero-3-phosphoethanolamine (2-acyl-GPE) into the cell. This is Lysophospholipid transporter LplT from Pectobacterium carotovorum subsp. carotovorum (strain PC1).